The sequence spans 1072 residues: DNA-directed RNA polymerase subunit beta (1072 aa).

Belongs to the RNA polymerase beta chain family. In terms of assembly, in plastids the minimal PEP RNA polymerase catalytic core is composed of four subunits: alpha, beta, beta', and beta''. When a (nuclear-encoded) sigma factor is associated with the core the holoenzyme is formed, which can initiate transcription.

The protein resides in the plastid. The protein localises to the chloroplast. The catalysed reaction is RNA(n) + a ribonucleoside 5'-triphosphate = RNA(n+1) + diphosphate. In terms of biological role, DNA-dependent RNA polymerase catalyzes the transcription of DNA into RNA using the four ribonucleoside triphosphates as substrates. This is DNA-directed RNA polymerase subunit beta from Lemna minor (Common duckweed).